Reading from the N-terminus, the 653-residue chain is Acetyl-coenzyme A synthetase 1 (653 aa).

CoA-binding positions include Arg191–Arg194, Thr311, and Asn335. Residues Gly387–Pro389, Asp411–Thr416, Asp500, and Arg515 contribute to the ATP site. Ser523 provides a ligand contact to CoA. Arg526 is an ATP binding site. Mg(2+)-binding residues include Val537, His539, and Val542. Arg584 is a CoA binding site. Lys609 is modified (N6-acetyllysine).

Belongs to the ATP-dependent AMP-binding enzyme family. It depends on Mg(2+) as a cofactor. Post-translationally, acetylated. Deacetylation by the SIR2-homolog deacetylase activates the enzyme.

It catalyses the reaction acetate + ATP + CoA = acetyl-CoA + AMP + diphosphate. Functionally, catalyzes the conversion of acetate into acetyl-CoA (AcCoA), an essential intermediate at the junction of anabolic and catabolic pathways. AcsA undergoes a two-step reaction. In the first half reaction, AcsA combines acetate with ATP to form acetyl-adenylate (AcAMP) intermediate. In the second half reaction, it can then transfer the acetyl group from AcAMP to the sulfhydryl group of CoA, forming the product AcCoA. The protein is Acetyl-coenzyme A synthetase 1 of Pseudomonas putida (strain ATCC 47054 / DSM 6125 / CFBP 8728 / NCIMB 11950 / KT2440).